We begin with the raw amino-acid sequence, 331 residues long: Adenosine deaminase (331 aa).

2 residues coordinate Zn(2+): H12 and H14. Residues H14, D16, and G170 each coordinate substrate. A Zn(2+)-binding site is contributed by H197. E200 functions as the Proton donor in the catalytic mechanism. D278 provides a ligand contact to Zn(2+). D279 serves as a coordination point for substrate.

It belongs to the metallo-dependent hydrolases superfamily. Adenosine and AMP deaminases family. Adenosine deaminase subfamily. The cofactor is Zn(2+).

The enzyme catalyses adenosine + H2O + H(+) = inosine + NH4(+). It catalyses the reaction 2'-deoxyadenosine + H2O + H(+) = 2'-deoxyinosine + NH4(+). Its function is as follows. Catalyzes the hydrolytic deamination of adenosine and 2-deoxyadenosine. The protein is Adenosine deaminase of Shewanella baltica (strain OS155 / ATCC BAA-1091).